The sequence spans 302 residues: Recombination-associated protein RdgC (302 aa).

This sequence belongs to the RdgC family.

It is found in the cytoplasm. The protein resides in the nucleoid. May be involved in recombination. The protein is Recombination-associated protein RdgC of Xylella fastidiosa (strain 9a5c).